Here is a 438-residue protein sequence, read N- to C-terminus: MSMFLDTAKISVQAGRGGDGMVAFRREKYVPNGGPWGGDGGKGGSVIFKVDEGLRTLMDFRYNRKFRAKAGEKGMTKGMHGRGSEDLIVLVPQGTTVKDAETGKVITDLVENGQEYVIAKGGRGGRGNIRFATPRNPAPEIAENGEPGEERELELELKILADVGLVGFPSVGKSTLLSVVSAAKPKIGAYHFTTIVPNLGMVRTKSGDSFAMADLPGLIEGASQGIGLGTQFLRHIERTRVILHVIDMSASEGRDPYEDYVSINNELETYNLRLLERPQIIVANKMDMPEAEEHLAAFKEKLAAEYDEFDDMPQIFPVSTLAKQGLDSLLDATANLLASTDEFLLYDESDYQVEDEVYYGFSEEEKAFEITRDDDASWVLSGEKLERLFVMTNMERDESIMKFARQLRGMGVDEALRERGAKDGDLVRIGNFEFEFVD.

The Obg domain occupies 2 to 160 (SMFLDTAKIS…RELELELKIL (159 aa)). A disordered region spans residues 128-147 (NIRFATPRNPAPEIAENGEP). An OBG-type G domain is found at 161 to 338 (ADVGLVGFPS…LLDATANLLA (178 aa)). GTP is bound by residues 167 to 174 (GFPSVGKS), 192 to 196 (FTTIV), 214 to 217 (DLPG), 284 to 287 (NKMD), and 319 to 321 (STL). Mg(2+)-binding residues include serine 174 and threonine 194. Residues 360 to 438 (GFSEEEKAFE…IGNFEFEFVD (79 aa)) enclose the OCT domain.

The protein belongs to the TRAFAC class OBG-HflX-like GTPase superfamily. OBG GTPase family. Monomer. It depends on Mg(2+) as a cofactor.

It is found in the cytoplasm. In terms of biological role, an essential GTPase which binds GTP, GDP and possibly (p)ppGpp with moderate affinity, with high nucleotide exchange rates and a fairly low GTP hydrolysis rate. Plays a role in control of the cell cycle, stress response, ribosome biogenesis and in those bacteria that undergo differentiation, in morphogenesis control. This is GTPase Obg from Streptococcus uberis (strain ATCC BAA-854 / 0140J).